Consider the following 156-residue polypeptide: Small ribosomal subunit protein uS7 (156 aa).

It belongs to the universal ribosomal protein uS7 family. In terms of assembly, part of the 30S ribosomal subunit. Contacts proteins S9 and S11.

Functionally, one of the primary rRNA binding proteins, it binds directly to 16S rRNA where it nucleates assembly of the head domain of the 30S subunit. Is located at the subunit interface close to the decoding center, probably blocks exit of the E-site tRNA. This is Small ribosomal subunit protein uS7 from Brevibacillus brevis (strain 47 / JCM 6285 / NBRC 100599).